Consider the following 564-residue polypeptide: Cytochrome c oxidase subunit 1 (564 aa).

The segment at 1–23 (MTAVAPRLENYAEPTRPAPTGGA) is disordered. 7 helical membrane passes run 43–63 (MMYI…ALLI), 83–103 (LFTL…VWGF), 122–142 (LNAF…AGFL), 171–191 (FWII…VNMI), 214–234 (IFVA…AALG), 259–279 (LFWF…FGIV), and 292–312 (FGYI…MAVW). His-87 contributes to the Fe(II)-heme a binding site. Residues His-265 and Tyr-269 each coordinate Cu cation. The segment at residues 265–269 (HPEVY) is a cross-link (1'-histidyl-3'-tyrosine (His-Tyr)). The Cu cation site is built by His-314 and His-315. Transmembrane regions (helical) follow at residues 316–336 (MFVT…LISV) and 360–380 (MTWT…GIML). His-398 is a binding site for heme a3. Transmembrane regions (helical) follow at residues 399–419 (FHYT…YFWF), 434–454 (IHFW…HWVG), and 477–497 (ISTV…WNVF). Residue His-400 coordinates Fe(II)-heme a.

It belongs to the heme-copper respiratory oxidase family. In terms of assembly, associates with subunits II, III and IV to form cytochrome c oxidase. Requires Cu(2+) as cofactor. Heme is required as a cofactor.

The protein localises to the cell membrane. The catalysed reaction is 4 Fe(II)-[cytochrome c] + O2 + 8 H(+)(in) = 4 Fe(III)-[cytochrome c] + 2 H2O + 4 H(+)(out). It participates in energy metabolism; oxidative phosphorylation. Functionally, cytochrome c oxidase is the component of the respiratory chain that catalyzes the reduction of oxygen to water. Subunits 1-3 form the functional core of the enzyme complex. CO I is the catalytic subunit of the enzyme. Electrons originating in cytochrome c are transferred via the copper A center of subunit 2 and heme A of subunit 1 to the bimetallic center formed by heme A3 and copper B. The polypeptide is Cytochrome c oxidase subunit 1 (ctaD) (Corynebacterium diphtheriae (strain ATCC 700971 / NCTC 13129 / Biotype gravis)).